Here is a 99-residue protein sequence, read N- to C-terminus: N(2)-fixation sustaining protein CowN (99 aa).

The protein belongs to the CowN family.

Its function is as follows. Is required to sustain N(2)-dependent growth in the presence of low levels of carbon monoxide (CO). Probably acts by protecting the N(2) fixation ability of the nitrogenase complex, which is inactivated in the presence of CO. The polypeptide is N(2)-fixation sustaining protein CowN (Magnetococcus marinus (strain ATCC BAA-1437 / JCM 17883 / MC-1)).